Reading from the N-terminus, the 123-residue chain is uncharacterized protein (123 aa).

A helical transmembrane segment spans residues 5–25; it reads GTLVIIFAIVLILCIMLLFFY. The tract at residues 32–53 is disordered; it reads KPSVLPPPIPPPTPPPSKKKYD. Over residues 35 to 47 the composition is skewed to pro residues; the sequence is VLPPPIPPPTPPP.

Belongs to the asfivirus CP123L family.

It is found in the host membrane. Its subcellular location is the virion. This is an uncharacterized protein from Ornithodoros (relapsing fever ticks).